Reading from the N-terminus, the 520-residue chain is Gamma aminobutyrate transaminase 3, chloroplastic (520 aa).

The N-terminal 44 residues, Met1–Arg44, are a transit peptide targeting the chloroplast. Gly172–Ser173 provides a ligand contact to pyridoxal 5'-phosphate. Position 205 (Tyr205) interacts with substrate. Asp312 contributes to the pyridoxal 5'-phosphate binding site. Lys341 serves as a coordination point for substrate. Lys341 is subject to N6-(pyridoxal phosphate)lysine.

It belongs to the class-III pyridoxal-phosphate-dependent aminotransferase family. As to expression, expressed in leaves, roots, stems, flowers and fruits.

Its subcellular location is the plastid. It is found in the chloroplast. The catalysed reaction is 4-aminobutanoate + pyruvate = succinate semialdehyde + L-alanine. It carries out the reaction 4-aminobutanoate + glyoxylate = succinate semialdehyde + glycine. Functionally, transaminase that degrades gamma-amino butyric acid (GABA) and uses pyruvate or glyoxylate as amino-group acceptor. Cannot use beta-alanine, ornithine, acetylornithine, serine, glycine, asparagine, glutamine, glutamate, valine, leucine, isoleucine, methionine, phenylalanine, histidine, lysine, arginine, aspartate, threonine, tyrosine, tryptophan, proline, or cysteine as amino donors. This Solanum lycopersicum (Tomato) protein is Gamma aminobutyrate transaminase 3, chloroplastic (GABA-TP3).